A 708-amino-acid polypeptide reads, in one-letter code: Quinohemoprotein alcohol dehydrogenase (708 aa).

A signal peptide spans Met1–Gln31. Residue Glu101 coordinates pyrroloquinoline quinone. Cys147 and Cys148 are joined by a disulfide. Residues Arg153, Thr198, and Gly214 to Ala215 contribute to the pyrroloquinoline quinone site. Glu216 provides a ligand contact to Ca(2+). A pyrroloquinoline quinone-binding site is contributed by Thr274. Asn294 and Asp339 together coordinate Ca(2+). Asp339 (proton acceptor) is an active-site residue. Pyrroloquinoline quinone is bound by residues Lys366, Asn425 to Trp426, and Val575. One can recognise a Cytochrome c domain in the interval Tyr619 to Pro708. Heme c is bound by residues Cys635, Cys638, His639, and Met678.

Belongs to the bacterial PQQ dehydrogenase family. As to quaternary structure, monomer. Pyrroloquinoline quinone serves as cofactor. Ca(2+) is required as a cofactor. It depends on heme c as a cofactor. In terms of processing, in the crystallographic structures Trp-543 is oxidized to 2'-hydroxytryptophan.

The protein resides in the periplasm. The enzyme catalyses 2 oxidized [azurin] + a primary alcohol = 2 reduced [azurin] + an aldehyde + 2 H(+). Its function is as follows. Catalyzes the dye-linked oxidation of primary alcohols to the corresponding aldehydes and the (subsequent) oxidation of the aldehydes to carboxylic acids. Methanol is not a substrate. The polypeptide is Quinohemoprotein alcohol dehydrogenase (Comamonas testosteroni (Pseudomonas testosteroni)).